The sequence spans 1192 residues: Protein argonaute 13 (1192 aa).

The PAZ domain maps to 183-296 (TVIQFVEEFL…LPMEVCKIVE (114 aa)). The 299-residue stretch at 472-770 (LLIVILLEVS…AASHAHCCIK (299 aa)) folds into the Piwi domain.

Belongs to the argonaute family. Ago subfamily.

Its function is as follows. Probably involved in the RNA silencing pathway. May bind to short RNAs such as microRNAs (miRNAs) or short interfering RNAs (siRNAs), and represses the translation of mRNAs which are complementary to them. This is Protein argonaute 13 (AGO13) from Oryza sativa subsp. japonica (Rice).